We begin with the raw amino-acid sequence, 305 residues long: Glycine--tRNA ligase alpha subunit (305 aa).

This sequence belongs to the class-II aminoacyl-tRNA synthetase family. As to quaternary structure, tetramer of two alpha and two beta subunits.

The protein resides in the cytoplasm. The catalysed reaction is tRNA(Gly) + glycine + ATP = glycyl-tRNA(Gly) + AMP + diphosphate. The chain is Glycine--tRNA ligase alpha subunit from Streptococcus pyogenes serotype M12 (strain MGAS2096).